A 221-amino-acid polypeptide reads, in one-letter code: Putative hemin import ATP-binding protein HrtA (221 aa).

One can recognise an ABC transporter domain in the interval leucine 3–aspartate 221. Glycine 39–threonine 46 serves as a coordination point for ATP.

Belongs to the ABC transporter superfamily. HrtA family. The complex is composed of two ATP-binding proteins (HrtA), two transmembrane proteins (HrtB) and a solute-binding protein.

It localises to the cell membrane. In terms of biological role, part of the ABC transporter complex hrt involved in hemin import. Responsible for energy coupling to the transport system. The sequence is that of Putative hemin import ATP-binding protein HrtA (hrtA) from Staphylococcus aureus (strain bovine RF122 / ET3-1).